Reading from the N-terminus, the 467-residue chain is Glutamate--tRNA ligase (467 aa).

A 'HIGH' region motif is present at residues 14–24 (PSPTGFLHLGG). A compositionally biased stretch (basic and acidic residues) spans 124-134 (PRYDGTWRPEP). Residues 124 to 156 (PRYDGTWRPEPGKTLPPVPAGRKPVVRFKNPQD) are disordered. A 'KMSKS' region motif is present at residues 246-250 (KLSKR). Residue Lys-249 coordinates ATP.

The protein belongs to the class-I aminoacyl-tRNA synthetase family. Glutamate--tRNA ligase type 1 subfamily. Monomer.

Its subcellular location is the cytoplasm. It carries out the reaction tRNA(Glu) + L-glutamate + ATP = L-glutamyl-tRNA(Glu) + AMP + diphosphate. Catalyzes the attachment of glutamate to tRNA(Glu) in a two-step reaction: glutamate is first activated by ATP to form Glu-AMP and then transferred to the acceptor end of tRNA(Glu). The polypeptide is Glutamate--tRNA ligase (Bordetella petrii (strain ATCC BAA-461 / DSM 12804 / CCUG 43448)).